We begin with the raw amino-acid sequence, 101 residues long: Eukaryotic translation initiation factor 4E-binding protein 3 (101 aa).

Residues 1 to 28 are disordered; it reads MSSSTSCPIPGCRDQLPDGYSTTPGGTL. The YXXXXLphi motif signature appears at 40 to 46; the sequence is YDRKFLL. Positions 97–101 match the TOS motif motif; the sequence is FEMDM.

Belongs to the eIF4E-binding protein family. In terms of assembly, interacts with EIF4E. Interacts with RPA2 (via N-terminus); the interaction enhances EIF4EBP3-mediated inhibition of EIF4E-mediated mRNA nuclear export. In terms of processing, phosphorylated.

The protein resides in the cytoplasm. Its subcellular location is the nucleus. Its function is as follows. Repressor of translation initiation that regulates EIF4E activity by preventing its assembly into the eIF4F complex: the hypophosphorylated form competes with EIF4G1/EIF4G3 and strongly binds to EIF4E, leading to repression of translation. In contrast, the hyperphosphorylated form dissociates from EIF4E, allowing interaction between EIF4G1/EIF4G3 and EIF4E, leading to initiation of translation. Inhibits EIF4E-mediated mRNA nuclear export. This is Eukaryotic translation initiation factor 4E-binding protein 3 (Eif4ebp3) from Mus musculus (Mouse).